We begin with the raw amino-acid sequence, 362 residues long: Serine/threonine-protein kinase SRK2D (362 aa).

The region spanning 23 to 279 (YDFVKDIGSG…IPEITSDKWF (257 aa)) is the Protein kinase domain. ATP-binding positions include 29 to 37 (IGSGNFGVA) and K52. D142 functions as the Proton acceptor in the catalytic mechanism.

This sequence belongs to the protein kinase superfamily. Ser/Thr protein kinase family. In terms of assembly, interacts with ABI1. Interacts with I-2, TOPP1 and TOPP2. Interacts with FREE1 (via C-terminus). As to expression, expressed in seeds, seedlings, roots (especially in tips), stems, leaves, shoots, flowers and siliques.

It carries out the reaction L-seryl-[protein] + ATP = O-phospho-L-seryl-[protein] + ADP + H(+). It catalyses the reaction L-threonyl-[protein] + ATP = O-phospho-L-threonyl-[protein] + ADP + H(+). Functionally, together with SRK2I, key component and activator of the abscisic acid (ABA) signaling pathway that regulates numerous ABA responses, such as seed germination, Pro accumulation, root growth inhibition, dormancy and seedling growth, and, to a lesser extent, stomatal closure. In response to ABA, phosphorylates the ESCRT-I complex component FREE1, which is required for ABA-induced FREE1 nuclear import. The sequence is that of Serine/threonine-protein kinase SRK2D (SRK2D) from Arabidopsis thaliana (Mouse-ear cress).